The primary structure comprises 62 residues: UPF0434 protein Arad_4458 (62 aa).

This sequence belongs to the UPF0434 family.

The sequence is that of UPF0434 protein Arad_4458 from Rhizobium rhizogenes (strain K84 / ATCC BAA-868) (Agrobacterium radiobacter).